Consider the following 402-residue polypeptide: Multidrug resistance protein MdtH (402 aa).

At 1–12 (MSRVSQARNLGK) the chain is on the cytoplasmic side. Residues 13–33 (YFLLIDNMLVVLVFFVVFPLI) form a helical membrane-spanning segment. At 34 to 98 (SIRFVDQMGW…GFATMGIAHE (65 aa)) the chain is on the periplasmic side. Residues 99-116 (PWLLWFSCFLSGLGGTLF) traverse the membrane as a helical segment. Residues 117 to 138 (DPPRSALVVKLIRPEQRGRFFS) are Cytoplasmic-facing. Residues 139–159 (LLMMQDSAGAVIGALLGSWLL) traverse the membrane as a helical segment. Residues 160 to 164 (QYDFR) are Periplasmic-facing. Residues 165 to 185 (LVCATGAILFILCALFNAWLL) form a helical membrane-spanning segment. The Cytoplasmic segment spans residues 186-213 (PAWKLSTVRTPVREGMRRVMSDKRFVTY). The helical transmembrane segment at 214–234 (VLTLAGYYMLAVQVMLMLPIM) threads the bilayer. The Periplasmic segment spans residues 235–243 (VNDIAGSPA). Residues 244–264 (AVKWMYAIEACLSLTLLYPIA) form a helical membrane-spanning segment. Residues 265-276 (RWSEKRFRLEHR) lie on the Cytoplasmic side of the membrane. A helical membrane pass occupies residues 277-297 (LMAGLLVMSLSMIPIGMVGNL). At 298–299 (QQ) the chain is on the periplasmic side. The helical transmembrane segment at 300-320 (LFTLICAFYIGSVIAEPARET) threads the bilayer. The Cytoplasmic segment spans residues 321-339 (LSASLADARARGSYMGFSR). Residues 340–360 (LGLAIGGAIGYIGGGWLFDMG) traverse the membrane as a helical segment. The Periplasmic segment spans residues 361-367 (KALTQPE). The helical transmembrane segment at 368-388 (LPWMMLGIIGFITFLALGWQF) threads the bilayer. Residues 389 to 402 (SHKRTPRRMLEPGA) lie on the Cytoplasmic side of the membrane.

The protein belongs to the major facilitator superfamily. DHA1 family. MdtH (TC 2.A.1.2.21) subfamily.

Its subcellular location is the cell inner membrane. The polypeptide is Multidrug resistance protein MdtH (Salmonella choleraesuis (strain SC-B67)).